The sequence spans 1441 residues: MATAAAAAAVMAPPGCPGSCPNFAVVCSFLERYGPLLDLPELPFPELERVLQAPPPDVGNGEVPKELVELHLKLMRKIGKSVTADRWEKYLIKICQEFNSTWAWEMEKKGYLEMSVECKLALLKYLCECQFDDNLKFKNIINEEDADTMRLQPIGRDKDGLMYWYQLDQDHNVRMYIEEQDDQDGSSWKCIVRNRNELAETLALLKAQIDPVLLKNSSQQDNSSRESPSLEDEETKKEEETPKQEEQKESEKMKSEEQPMDLENRSTANVLEETTVKKEKEDEKELVKLPVIVKLEKPLPENEEKKIIKEESDSFKENVKPIKVEVKECRADPKDTKSSMEKPVAQEPERIEFGGNIKSSHEITEKSTEETEKLKNDQQAKIPLKKREIKLSDDFDSPVKGPLCKSVTPTKEFLKDEIKQEEETCKRISTITALGHEGKQLVNGEVSDERVAPNFKTEPIETKFYETKEESYSPSKDRNIITEGNGTESLNSVITSMKTGELEKETAPLRKDADSSISVLEIHSQKAQIEEPDPPEMETSLDSSEMAKDLSSKTALSSTESCTMKGEEKSPKTKKDKRPPILECLEKLEKSKKTFLDKDAQRLSPIPEEVPKSTLESEKPGSPEAAETSPPSNIIDHCEKLASEKEVVECQSTSTVGGQSVKKVDLETLKEDSEFTKVEMDNLDNAQTSGIEEPSETKGSMQKSKFKYKLVPEEETTASENTEITSERQKEGIKLTIRISSRKKKPDSPPKVLEPENKQEKTEKEEEKTNVGRTLRRSPRISRPTAKVAEIRDQKADKKRGEGEDEVEEESTALQKTDKKEILKKSEKDTNSKVSKVKPKGKVRWTGSRTRGRWKYSSNDESEGSGSEKSSAASEEEEEKESEEAILADDDEPCKKCGLPNHPELILLCDSCDSGYHTACLRPPLMIIPDGEWFCPPCQHKLLCEKLEEQLQDLDVALKKKERAERRKERLVYVGISIENIIPPQEPDFSEDQEEKKKDSKKSKANLLERRSTRTRKCISYRFDEFDEAIDEAIEDDIKEADGGGVGRGKDISTITGHRGKDISTILDEERKENKRPQRAAAARRKKRRRLNDLDSDSNLDEEESEDEFKISDGSQDEFVVSDENPDESEEDPPSNDDSDTDFCSRRLRRHPSRPMRQSRRLRRKTPKKKYSDDDEEEESEENSRDSESDFSDDFSDDFVETRRRRSRRNQKRQINYKEDSESDGSQKSLRRGKEIRRVHKRRLSSSESEESYLSKNSEDDELAKESKRSVRKRGRSTDEYSEADEEEEEEEGKPSRKRLHRIETDEEESCDNAHGDANQPARDSQPRVLPSEQESTKKPYRIESDEEEDFENVGKVGSPLDYSLVDLPSTNGQSPGKAIENLIGKPTEKSQTPKDNSTASASLASNGTSGGQEAGAPEEEEDELLRVTDLVDYVCNSEQL.

The region spanning 17–84 (PGSCPNFAVV…MRKIGKSVTA (68 aa)) is the DDT domain. Glycyl lysine isopeptide (Lys-Gly) (interchain with G-Cter in SUMO2) cross-links involve residues lysine 136 and lysine 215. The span at 215–227 (KNSSQQDNSSRES) shows a compositional bias: polar residues. The tract at residues 215 to 283 (KNSSQQDNSS…TTVKKEKEDE (69 aa)) is disordered. Serine 227 carries the phosphoserine modification. Composition is skewed to basic and acidic residues over residues 234 to 257 (ETKK…KSEE) and 274 to 283 (TTVKKEKEDE). Residues lysine 236, lysine 243, lysine 248, lysine 252, and lysine 254 each participate in a glycyl lysine isopeptide (Lys-Gly) (interchain with G-Cter in SUMO2) cross-link. Residue lysine 277 forms a Glycyl lysine isopeptide (Lys-Gly) (interchain with G-Cter in SUMO1); alternate linkage. Lysine 277 is covalently cross-linked (Glycyl lysine isopeptide (Lys-Gly) (interchain with G-Cter in SUMO2); alternate). Residues lysine 284, lysine 288, lysine 294, lysine 305, lysine 306, lysine 309, lysine 323, lysine 327, lysine 337, lysine 342, lysine 358, lysine 373, lysine 381, and lysine 390 each participate in a glycyl lysine isopeptide (Lys-Gly) (interchain with G-Cter in SUMO2) cross-link. Residues 330–340 (RADPKDTKSSM) show a composition bias toward basic and acidic residues. Residues 330 to 385 (RADPKDTKSSMEKPVAQEPERIEFGGNIKSSHEITEKSTEETEKLKNDQQAKIPLK) are disordered. A compositionally biased stretch (basic and acidic residues) spans 359–378 (SSHEITEKSTEETEKLKNDQ). Residues serine 392 and serine 397 each carry the phosphoserine modification. Residues lysine 400, lysine 405, lysine 415, and lysine 419 each participate in a glycyl lysine isopeptide (Lys-Gly) (interchain with G-Cter in SUMO2) cross-link. Serine 429 is modified (phosphoserine). Lysine 439 is covalently cross-linked (Glycyl lysine isopeptide (Lys-Gly) (interchain with G-Cter in SUMO2)). A Glycyl lysine isopeptide (Lys-Gly) (interchain with G-Cter in SUMO1); alternate cross-link involves residue lysine 456. Lysine 456 is covalently cross-linked (Glycyl lysine isopeptide (Lys-Gly) (interchain with G-Cter in SUMO2); alternate). Glycyl lysine isopeptide (Lys-Gly) (interchain with G-Cter in SUMO2) cross-links involve residues lysine 463 and lysine 468. Over residues 467–480 (TKEESYSPSKDRNI) the composition is skewed to basic and acidic residues. The disordered stretch occupies residues 467-634 (TKEESYSPSK…AAETSPPSNI (168 aa)). Serine 473 is modified (phosphoserine). A compositionally biased stretch (polar residues) spans 482–498 (TEGNGTESLNSVITSMK). Residue lysine 498 forms a Glycyl lysine isopeptide (Lys-Gly) (interchain with G-Cter in SUMO2) linkage. Residues 500-514 (GELEKETAPLRKDAD) are compositionally biased toward basic and acidic residues. Serine 524 carries the phosphoserine modification. Residues 552–562 (SKTALSSTESC) show a composition bias toward polar residues. Lysine 565 participates in a covalent cross-link: Glycyl lysine isopeptide (Lys-Gly) (interchain with G-Cter in SUMO2). A compositionally biased stretch (basic and acidic residues) spans 565-601 (KGEEKSPKTKKDKRPPILECLEKLEKSKKTFLDKDAQ). Phosphoserine occurs at positions 570 and 604. Over residues 609 to 621 (EVPKSTLESEKPG) the composition is skewed to basic and acidic residues. Serine 622 is modified (phosphoserine). Threonine 628 carries the phosphothreonine modification. A Phosphoserine modification is found at serine 629. Residues lysine 662, lysine 663, lysine 670, lysine 677, lysine 698, and lysine 709 each participate in a glycyl lysine isopeptide (Lys-Gly) (interchain with G-Cter in SUMO2) cross-link. The segment at 675–887 (FTKVEMDNLD…EEKESEEAIL (213 aa)) is disordered. Serine 748 is modified (phosphoserine). Basic and acidic residues-rich tracts occupy residues 753–770 (LEPE…EKTN), 789–802 (AEIR…KRGE), and 816–831 (KTDK…KDTN). Glycyl lysine isopeptide (Lys-Gly) (interchain with G-Cter in SUMO2) cross-links involve residues lysine 758, lysine 768, lysine 795, and lysine 799. Residues 864–873 (GSGSEKSSAA) show a composition bias toward low complexity. Acidic residues predominate over residues 874–887 (SEEEEEKESEEAIL). Serine 882 bears the Phosphoserine mark. The PHD-type zinc-finger motif lies at 891-941 (DEPCKKCGLPNHPELILLCDSCDSGYHTACLRPPLMIIPDGEWFCPPCQHK). Residues 942-1012 (LLCEKLEEQL…SKANLLERRS (71 aa)) are a coiled coil. The interval 983–1007 (PPQEPDFSEDQEEKKKDSKKSKANL) is disordered. Lysine 1039 is covalently cross-linked (Glycyl lysine isopeptide (Lys-Gly) (interchain with G-Cter in SUMO2)). At lysine 1050 the chain carries N6-acetyllysine. The disordered stretch occupies residues 1063–1428 (ISTILDEERK…EEEEDELLRV (366 aa)). Acidic residues-rich tracts occupy residues 1094–1107 (LDSD…ESED) and 1120–1141 (VVSD…DSDT). Phosphoserine is present on residues serine 1096, serine 1098, and serine 1105. A compositionally biased stretch (basic residues) spans 1146-1169 (RRLRRHPSRPMRQSRRLRRKTPKK). The span at 1189–1199 (SDFSDDFSDDF) shows a compositional bias: acidic residues. Residues 1203–1212 (RRRRSRRNQK) show a composition bias toward basic residues. Serine 1221, serine 1223, and serine 1226 each carry phosphoserine. Basic residues predominate over residues 1229–1244 (SLRRGKEIRRVHKRRL). Residues serine 1258 and serine 1277 each carry the phosphoserine modification. Position 1278 is a phosphothreonine (threonine 1278). The span at 1280–1292 (EYSEADEEEEEEE) shows a compositional bias: acidic residues. The residue at position 1305 (threonine 1305) is a Phosphothreonine. 2 positions are modified to phosphoserine: serine 1325 and serine 1336. Positions 1335–1344 (ESTKKPYRIE) are enriched in basic and acidic residues. Lysine 1339 is modified (N6-acetyllysine). Phosphoserine occurs at positions 1345, 1359, and 1375. Positions 1394-1408 (PKDNSTASASLASNG) are enriched in polar residues.

Component of the RSF-1 ISWI chromatin-remodeling complex at least composed of SMARCA1 and RSF1. Within the RSF-1 ISWI chromatin-remodeling complex interacts with SMARCA1. Component of the RSF-5 ISWI chromatin-remodeling complex (also called the RSF complex) at least composed of SMARCA5/SNF2H and RSF1. Within the RSF-5 ISWI chromatin-remodeling complex interacts with SMARCA5/SNF2H; the interaction is direct. Identified in a centromere complex containing histones H2A, H2B and H4, and at least CENPA, CENPB, CENPC, CENPT, CENPN, HJURP, SUPT16H, SSRP1 and RSF1. Also binds the HBV pX/HBx protein, which is required to activate transcription of the viral genome. Post-translationally, phosphorylated. As to expression, ubiquitously expressed. Highly expressed in the heart, skeletal muscle, kidney and placenta. Expressed at low levels in the brain and colon.

Its subcellular location is the nucleus. Regulatory subunit of the ATP-dependent RSF-1 and RSF-5 ISWI chromatin-remodeling complexes, which form ordered nucleosome arrays on chromatin and facilitate access to DNA during DNA-templated processes such as DNA replication, transcription, and repair. Binds to core histones together with SMARCA5, and is required for the assembly of regular nucleosome arrays by the RSF-5 ISWI chromatin-remodeling complex. Directly stimulates the ATPase activity of SMARCA1 and SMARCA5 in the RSF-1 and RSF-5 ISWI chromatin-remodeling complexes, respectively. The RSF-1 ISWI chromatin remodeling complex has a lower ATP hydrolysis rate than the RSF-5 ISWI chromatin-remodeling complex. The complexes do not have the ability to slide mononucleosomes to the center of a DNA template. Facilitates transcription of hepatitis B virus (HBV) genes by the pX transcription activator. In case of infection by HBV, together with pX, it represses TNF-alpha induced NF-kappa-B transcription activation. Represses transcription when artificially recruited to chromatin by fusion to a heterogeneous DNA binding domain. This Homo sapiens (Human) protein is Remodeling and spacing factor 1 (RSF1).